The sequence spans 126 residues: Fluoride-specific ion channel FluC (126 aa).

The next 4 helical transmembrane spans lie at L3–G23, L35–F55, F68–V88, and I103–V123. Na(+) is bound by residues G75 and S78.

The protein belongs to the fluoride channel Fluc/FEX (TC 1.A.43) family.

It is found in the cell inner membrane. The catalysed reaction is fluoride(in) = fluoride(out). Its activity is regulated as follows. Na(+) is not transported, but it plays an essential structural role and its presence is essential for fluoride channel function. In terms of biological role, fluoride-specific ion channel. Important for reducing fluoride concentration in the cell, thus reducing its toxicity. The polypeptide is Fluoride-specific ion channel FluC (Paraburkholderia phymatum (strain DSM 17167 / CIP 108236 / LMG 21445 / STM815) (Burkholderia phymatum)).